A 319-amino-acid polypeptide reads, in one-letter code: L-lactate dehydrogenase 2 (319 aa).

Residues V16, D37, K42, Y68, and 82–83 each bind NAD(+); that span reads GA. Positions 85 and 91 each coordinate substrate. NAD(+) contacts are provided by residues S104, 121–123, and S146; that span reads AAN. Substrate is bound at residue 123 to 126; it reads NPVD. 151–154 serves as a coordination point for substrate; it reads DSAR. H178 serves as the catalytic Proton acceptor. Y222 bears the Phosphotyrosine mark. Residue T231 participates in substrate binding.

The protein belongs to the LDH/MDH superfamily. LDH family. In terms of assembly, homotetramer.

It localises to the cytoplasm. The enzyme catalyses (S)-lactate + NAD(+) = pyruvate + NADH + H(+). It participates in fermentation; pyruvate fermentation to lactate; (S)-lactate from pyruvate: step 1/1. Catalyzes the conversion of lactate to pyruvate (Potential). Contributes to S.aureus growth during nitrosative stress in both aerobically and anaerobically cultured cells, despite playing a secondary role in this resistance mechanism. In Staphylococcus aureus (strain Mu3 / ATCC 700698), this protein is L-lactate dehydrogenase 2.